Here is a 314-residue protein sequence, read N- to C-terminus: Putative S-adenosyl-L-methionine-dependent methyltransferase MAB_3886c (314 aa).

S-adenosyl-L-methionine contacts are provided by residues Asp133 and 162–163 (DL).

The protein belongs to the UPF0677 family.

In terms of biological role, exhibits S-adenosyl-L-methionine-dependent methyltransferase activity. The protein is Putative S-adenosyl-L-methionine-dependent methyltransferase MAB_3886c of Mycobacteroides abscessus (strain ATCC 19977 / DSM 44196 / CCUG 20993 / CIP 104536 / JCM 13569 / NCTC 13031 / TMC 1543 / L948) (Mycobacterium abscessus).